The primary structure comprises 330 residues: D-alanine--D-alanine ligase (330 aa).

The region spanning 122-323 (NRFLSGFGIR…MKEVLCTIIR (202 aa)) is the ATP-grasp domain. 151-206 (IARMGLPLFVKPNVGGSSIATTKVVEAAQLLPAIEQAFSEGEEVMIERLICGTEVT) contacts ATP. Mg(2+)-binding residues include Asp-277, Glu-290, and Asn-292.

The protein belongs to the D-alanine--D-alanine ligase family. It depends on Mg(2+) as a cofactor. Mn(2+) serves as cofactor.

The protein localises to the cytoplasm. The catalysed reaction is 2 D-alanine + ATP = D-alanyl-D-alanine + ADP + phosphate + H(+). It participates in cell wall biogenesis; peptidoglycan biosynthesis. In terms of biological role, cell wall formation. The chain is D-alanine--D-alanine ligase from Porphyromonas gingivalis (strain ATCC BAA-308 / W83).